Consider the following 689-residue polypeptide: Solute carrier family 22 member 23 (689 aa).

2 disordered regions span residues 1–55 and 162–188; these read MAID…PLPA and TASW…GKGN. N-linked (GlcNAc...) asparagine glycosylation occurs at Asn-24. Residues 165 to 177 are compositionally biased toward polar residues; sequence WGTTSNRSNSSDT. The next 2 membrane-spanning stretches (helical) occupy residues 229 to 249 and 253 to 273; these read FSLL…ADWV and PVLL…ALSV. The N-linked (GlcNAc...) asparagine glycan is linked to Asn-274. The next 8 membrane-spanning stretches (helical) occupy residues 283–303, 310–330, 339–359, 466–486, 489–509, 541–561, 572–592, and 601–621; these read FFEG…RIEL, FIIT…MPGL, VLQA…SIFP, TMAS…KFLG, GGLL…LGLL, IAFS…SVFF, CGGL…APII, and FLHH…ILLL.

Belongs to the major facilitator (TC 2.A.1) superfamily. Organic cation transporter (TC 2.A.1.19) family.

Its subcellular location is the membrane. This is Solute carrier family 22 member 23 (Slc22a23) from Mus musculus (Mouse).